We begin with the raw amino-acid sequence, 509 residues long: L-arabinose isomerase (509 aa).

The Mn(2+) site is built by Glu313, Glu340, His357, and His456.

This sequence belongs to the arabinose isomerase family. Mn(2+) is required as a cofactor.

The catalysed reaction is beta-L-arabinopyranose = L-ribulose. It functions in the pathway carbohydrate degradation; L-arabinose degradation via L-ribulose; D-xylulose 5-phosphate from L-arabinose (bacterial route): step 1/3. Its function is as follows. Catalyzes the conversion of L-arabinose to L-ribulose. The polypeptide is L-arabinose isomerase (Bacteroides thetaiotaomicron (strain ATCC 29148 / DSM 2079 / JCM 5827 / CCUG 10774 / NCTC 10582 / VPI-5482 / E50)).